Consider the following 273-residue polypeptide: Translation initiation factor 2 subunit alpha (273 aa).

In terms of domain architecture, S1 motif spans 12-83; the sequence is GEFVVATVKN…EKGHIDLSLK (72 aa).

This sequence belongs to the eIF-2-alpha family. As to quaternary structure, heterotrimer composed of an alpha, a beta and a gamma chain.

In terms of biological role, eIF-2 functions in the early steps of protein synthesis by forming a ternary complex with GTP and initiator tRNA. This chain is Translation initiation factor 2 subunit alpha, found in Thermococcus gammatolerans (strain DSM 15229 / JCM 11827 / EJ3).